The chain runs to 367 residues: MSLNRILVINPGSTSTKIGVFDNERPVLEETIRHDEEQIGKYKRIIDQYEFRKETILEVLHSHGINISKLNAVCGRGGLLRPIEGGTYTVNDAMLEDLKNGFSGHHASNLGGILAYEIASGLNIPAFIVDPVVVDEMEPVARISGIAGMERKSIFHALNQKAVARKVAEELNHKYEDLNLLVTHMGGGITVGAHKKGKVIDVNNGLNGEGPFSPERAGTVPVGQLVEMCFSGEYYRDEMVKKLVGQGGLVSLIGTNDAIKVEQMVEKGDPEATLIYKAMAYQVAKEIGGASAVLHGKIDAIVLTGGLAYSKILVDEIKERVDWIADVIVHPGEDELQALAEGALRVLREEEAPKEYIVREKETVARG.

It belongs to the acetokinase family.

It localises to the cytoplasm. It carries out the reaction butanoate + ATP = butanoyl phosphate + ADP. In Bacillus cereus (strain ATCC 10987 / NRS 248), this protein is Probable butyrate kinase.